We begin with the raw amino-acid sequence, 98 residues long: UPF0235 protein Asuc_1977 (98 aa).

Belongs to the UPF0235 family.

In Actinobacillus succinogenes (strain ATCC 55618 / DSM 22257 / CCUG 43843 / 130Z), this protein is UPF0235 protein Asuc_1977.